Here is a 1098-residue protein sequence, read N- to C-terminus: MLEADLVSKMLRAVLQSHKNGIALPRLQGEYRSLTGDWIPFKQLGYPTLEAYLRSVPAVVRIETSRSGEVTCYAVACTETARIAQLVARQRSSKRKTGRQVNCQMRVKKTMPFFLEGKPKATLRQPGFSSDFSVSKKPNSTLLRNKGISLGVKSDAEVLPYTLQTTIGNEVFKDVPVQSHMTMSTNNRFSPKASLPPRFQMHLSRTCTKEMSDNLNQAVEKPNVTPPASYTYKMDEVQNRIKEILNKHSNGIWISKLPHFYKELYKEELNQGILQQFEHWPHICTVEKPCSGGQDLLLYPAKRKQLLRSELNTEKVPPSPLPAPKQIPPLKGCPAVMPGDFKEKVAELLVKYSSGLWASALPKTFEDMYKVKLPEDALKNLDLLSDVCTVDYISGNPQKAILYAKLPSPADKILKDAEQAHGNYDIKSTVEQEYLQIEENIAESTDTFMETVTIPPLIIPTETSPSVLVVELSNTNEVVIRYVGKDYSAAQELMEDEMKEYYSKNSKVTPVQTVQIGQLLAVNAEEDAWLRAQVISMEEGKIKVCYVDYGFSENVEKSKAYRLNPKFCSLSFQATKCKLAGLEVLSDDPDLVKVVESLTCGKIFAVEILEKTDIPLVVLYDTSGEDDININATCLKAICDKSLEVHLQVDAMYTNVRVTNICSDGTLYCQVPCKGLNKLNDLLHKIEEYFHCKHMTSEYFVSLPFCGKVCLFHCKGKWLRVEITNVHSSRALDVQFLDAGTVTSVKVSELREIPPRFLQEMISVPPQAIKCCLADLPQSIGMWTPDAVLWLRDSVLNCSDCSIKVTKVDETRGIAHIYLFTPKNFPDPHRSINRQITNADLWKHQKDVFLSAISSGASSPNTKSANTPILGNTGETFRKSLTDVLKKSVVNHPSSFFTKELPPPVHLSKPGEHMDVYVPVACHPGYFVIQPWQEIHKLEVLMEEMILYYSVSEERHVAVEKDQVYAAKVENKWHRVLLKGILTNGLVSVYELDYGKHELVNMRKVQPLADMFRKLPFQAVTAQLAGVKCNQWSEEASMVFRNHVEKKPLVALVQTVIENTNPWDRKVVVYLVDTSLPDTDIWIHDFMSEYLVELSKVN.

2 consecutive HTH OST-type domains span residues 3–76 (EADL…YAVA) and 233–302 (KMDE…YPAK). Residue S319 is modified to Phosphoserine. An HTH OST-type 3 domain is found at 337–406 (MPGDFKEKVA…PQKAILYAKL (70 aa)). Tudor domains lie at 513–570 (TVQI…FCSL) and 703–760 (LPFC…FLQE). S859 carries the post-translational modification Phosphoserine. The segment at 861-1098 (NTKSANTPIL…EYLVELSKVN (238 aa)) is interaction with CDK17. The tract at residues 893–1098 (PSSFFTKELP…EYLVELSKVN (206 aa)) is interaction with CABLES1.

The protein belongs to the TDRD7 family. Found in a mRNP complex, at least composed of TDRD1, TDRD6, TDRD7 and DDX4. Found in a complex containing CABLES1, CDK16 and CDK17. Interacts with CABLES1, CDK17 and PIWIL1.

The protein localises to the cytoplasm. Functionally, component of specific cytoplasmic RNA granules involved in post-transcriptional regulation of specific genes: probably acts by binding to specific mRNAs and regulating their translation. Required for lens transparency during lens development, by regulating translation of genes such as CRYBB3 and HSPB1 in the developing lens. Also required during spermatogenesis. This Bos taurus (Bovine) protein is Tudor domain-containing protein 7 (TDRD7).